We begin with the raw amino-acid sequence, 179 residues long: Shikimate kinase (179 aa).

G12–K17 contacts ATP. Residue S16 coordinates Mg(2+). Residues D34, R61, and G83 each coordinate substrate. R131 contacts ATP. R147 contacts substrate.

This sequence belongs to the shikimate kinase family. Monomer. Mg(2+) serves as cofactor.

It localises to the cytoplasm. The catalysed reaction is shikimate + ATP = 3-phosphoshikimate + ADP + H(+). The protein operates within metabolic intermediate biosynthesis; chorismate biosynthesis; chorismate from D-erythrose 4-phosphate and phosphoenolpyruvate: step 5/7. Catalyzes the specific phosphorylation of the 3-hydroxyl group of shikimic acid using ATP as a cosubstrate. The protein is Shikimate kinase of Leptospira borgpetersenii serovar Hardjo-bovis (strain JB197).